Consider the following 352-residue polypeptide: Coproporphyrin III ferrochelatase (352 aa).

Residues serine 52 and tyrosine 121 each coordinate Fe-coproporphyrin III. The Fe(2+) site is built by histidine 181 and glutamate 269.

It belongs to the ferrochelatase family.

It localises to the cytoplasm. The catalysed reaction is Fe-coproporphyrin III + 2 H(+) = coproporphyrin III + Fe(2+). It functions in the pathway porphyrin-containing compound metabolism; protoheme biosynthesis. Involved in coproporphyrin-dependent heme b biosynthesis. Catalyzes the insertion of ferrous iron into coproporphyrin III to form Fe-coproporphyrin III. This is Coproporphyrin III ferrochelatase from Nocardia farcinica (strain IFM 10152).